Consider the following 656-residue polypeptide: Ankyrin repeat and SAM domain-containing protein 3 (656 aa).

The interaction with NEK7 stretch occupies residues 1 to 422; it reads MSELSDEASE…AESSPQTQRA (422 aa). Phosphoserine occurs at positions 2 and 5. ANK repeat units lie at residues 34–64, 68–97, 101–130, 134–163, 168–197, and 201–220; these read DVPLDLHTAASIGQYEVVKECVQRRELDLNK, GGWTPLMYASYIGHDTIVHLLLEAGVSVNV, EGQTPLMLASSCGNESIAYFLLQQGAELEM, QGWTALFHCTSAGHQHMVRFLLDSGANANV, CGFTPLMEAAAAGHEIIVQYFLNHGVKVDA, and SGATARMLAKQYGHMKIVAL. Asparagine 96 is modified (3-hydroxyasparagine). A phosphoserine mark is found at serine 201, serine 225, serine 243, serine 244, and serine 245. Disordered stretches follow at residues 235 to 265 and 277 to 312; these read SPEKYEDLSSSDESCPAPQRQRPCRKKGVSI and GIGLGGRAPRPRYEQAPPRGYVTFNSSGENPLEEEG. The residue at position 319 (threonine 319) is a Phosphothreonine. A phosphoserine mark is found at serine 320, serine 368, serine 371, and serine 375. Residues 346-425 form a disordered region; it reads GPVQSSSSSE…SPQTQRAPYS (80 aa). Residues 425-488 enclose the SAM domain; it reads SGPQDLAALL…TSAIARWHSS (64 aa). A coiled-coil region spans residues 501–526; sequence ADRLEAEMQELAIQLHKRCEEVEATR. Serine 541 carries the post-translational modification Phosphoserine.

Homooligomer. Interacts (via SAM domain) with ANKS6 (via SAM domain). Interacts with BICC1. Interacts with NPHP1. Interacts with NEK8. Interacts with HIF1AN. Interacts with NEK7; this interaction alters the subcellular distribution of NEK7 by preventing its nuclear translocation. Post-translationally, hydroxylated at Asn-96, most probably by HIF1AN. In terms of processing, phosphorylations at Ser-5, Ser-225, Thr-319, Ser-320, Ser-368 and Ser-371 occur in a NEK7-dependent manner. Polyubiquitinated.

The protein resides in the cell projection. The protein localises to the cilium. It localises to the cytoplasm. Its function is as follows. May be involved in vasopressin signaling in the kidney. This chain is Ankyrin repeat and SAM domain-containing protein 3 (ANKS3), found in Homo sapiens (Human).